Here is a 174-residue protein sequence, read N- to C-terminus: Shikimate kinase 2 (174 aa).

Residue 12–17 (GAGKTT) coordinates ATP. Mg(2+)-binding residues include T16 and D32. D34, R58, and G79 together coordinate substrate. The tract at residues 112 to 126 (MQQPESTQRPSLTGK) is LID domain. Residue R120 participates in ATP binding. R139 contacts substrate.

This sequence belongs to the shikimate kinase family. AroL subfamily. As to quaternary structure, monomer. Requires Mg(2+) as cofactor.

Its subcellular location is the cytoplasm. It carries out the reaction shikimate + ATP = 3-phosphoshikimate + ADP + H(+). Its pathway is metabolic intermediate biosynthesis; chorismate biosynthesis; chorismate from D-erythrose 4-phosphate and phosphoenolpyruvate: step 5/7. In terms of biological role, catalyzes the specific phosphorylation of the 3-hydroxyl group of shikimic acid using ATP as a cosubstrate. The sequence is that of Shikimate kinase 2 from Photorhabdus laumondii subsp. laumondii (strain DSM 15139 / CIP 105565 / TT01) (Photorhabdus luminescens subsp. laumondii).